A 651-amino-acid polypeptide reads, in one-letter code: Meiotic expression up-regulated protein 6 (651 aa).

Basic and acidic residues-rich tracts occupy residues 1–12 and 21–30; these read MSYEGREERPEQ and VSEHNEHDSG. Residues 1 to 102 form a disordered region; it reads MSYEGREERP…EKKSKKKAKD (102 aa). Residues 72–83 show a composition bias toward acidic residues; it reads TVDNIDPADDDP. Over residues 90–102 the composition is skewed to basic and acidic residues; the sequence is KVEEKKSKKKAKD. The region spanning 194–261 is the PH domain; it reads CRGLLFYSKS…WITDLKNAIA (68 aa). 3 disordered regions span residues 365-430, 468-514, and 587-630; these read TVEA…GTPI, VATP…KGGN, and TIKP…QMPQ. Polar residues-rich tracts occupy residues 410-429 and 478-490; these read ESTS…NGTP and PSTA…SVVS. Residues 497–514 are compositionally biased toward basic residues; it reads KKAGKKHHRHHKKKKGGN. Residues 587-604 are compositionally biased toward low complexity; it reads TIKPETPLTPTTTPTPRT.

The sequence is that of Meiotic expression up-regulated protein 6 (meu6) from Schizosaccharomyces pombe (strain 972 / ATCC 24843) (Fission yeast).